A 291-amino-acid chain; its full sequence is Small ribosomal subunit protein uS2 (291 aa).

The disordered stretch occupies residues 270-291; the sequence is NINEEANTEFEQALSDADEDKN.

This sequence belongs to the universal ribosomal protein uS2 family.

The chain is Small ribosomal subunit protein uS2 from Rickettsia bellii (strain OSU 85-389).